The sequence spans 164 residues: Lipoprotein signal peptidase (164 aa).

2 helical membrane-spanning segments follow: residues 68–88 and 96–116; these read TILV…LWNA and FWGL…RAMF. Residues Asp-121 and Asp-139 contribute to the active site. The helical transmembrane segment at 134–154 threads the bilayer; that stretch reads TFNVADSAIVVGSCLLLIDLL.

It belongs to the peptidase A8 family.

The protein localises to the cell inner membrane. The enzyme catalyses Release of signal peptides from bacterial membrane prolipoproteins. Hydrolyzes -Xaa-Yaa-Zaa-|-(S,diacylglyceryl)Cys-, in which Xaa is hydrophobic (preferably Leu), and Yaa (Ala or Ser) and Zaa (Gly or Ala) have small, neutral side chains.. Its pathway is protein modification; lipoprotein biosynthesis (signal peptide cleavage). Its function is as follows. This protein specifically catalyzes the removal of signal peptides from prolipoproteins. The protein is Lipoprotein signal peptidase of Solibacter usitatus (strain Ellin6076).